A 164-amino-acid chain; its full sequence is Interleukin-31 (164 aa).

Positions 1 to 23 are cleaved as a signal peptide; sequence MASHSGPSTSVLFLFCCLGGWLA. N-linked (GlcNAc...) asparagine glycosylation is found at Asn-67 and Asn-100.

Detected at low levels in testis, bone marrow, skeletal muscle, kidney, colon, thymus, small intestine and trachea.

The protein localises to the secreted. Functionally, activates STAT3 and possibly STAT1 and STAT5 through the IL31 heterodimeric receptor composed of IL31RA and OSMR. May function in skin immunity. Enhances myeloid progenitor cell survival in vitro. Induces RETNLA and serum amyloid A protein expression in macrophages. In Homo sapiens (Human), this protein is Interleukin-31 (IL31).